The sequence spans 117 residues: MQKSCGENERKPQNMPKAEEDRPLEAVPQEAEGNPQPSEEGVSQEAEGNLRGGLTQPGQGYKEDSPVRHLDPEEMIRGADELERLREEIRRVRNKFVMMHWKQRHSRSRPYPVCFRP.

Basic and acidic residues-rich tracts occupy residues Met1 to Leu24 and Tyr61 to Glu74. The segment at Met1 to Glu74 is disordered. The stretch at Glu73–His100 forms a coiled coil.

It belongs to the TFS-II family. TFA subfamily.

Its subcellular location is the nucleus. Its function is as follows. May be involved in transcriptional regulation. This chain is Transcription elongation factor A protein-like 8 (TCEAL8), found in Bos taurus (Bovine).